The chain runs to 264 residues: Major prion protein (264 aa).

The N-terminal stretch at 1–24 (MVKSHIGSWILVLFVAMWSDVGLC) is a signal peptide. The tract at residues 25–241 (KKRPKPGGGW…ESQAYYQRGA (217 aa)) is interaction with GRB2, ERI3 and SYN1. Residues 28 to 118 (PKPGGGWNTG…QWNKPSKPKT (91 aa)) form a disordered region. Repeat copies occupy residues 54-62 (PQGGGSWGQ), 63-70 (PHGGGWGQ), 71-78 (PHGGSWGQ), 79-86 (PHGGGWGQ), 87-94 (PHGGGWGQ), and 95-103 (PHGGGGWGQ). The interval 54-103 (PQGGGSWGQPHGGGWGQPHGGSWGQPHGGGWGQPHGGGWGQPHGGGGWGQ) is 6 X 8 AA tandem repeats of P-H-G-G-G-W-G-Q. A compositionally biased stretch (gly residues) spans 55 to 107 (QGGGSWGQPHGGGWGQPHGGSWGQPHGGGWGQPHGGGWGQPHGGGGWGQGGTH). Histidine 72, glycine 73, glycine 74, histidine 80, glycine 81, glycine 82, histidine 88, glycine 89, glycine 90, histidine 96, glycine 98, and glycine 99 together coordinate Cu(2+). Cysteine 190 and cysteine 225 form a disulfide bridge. N-linked (GlcNAc...) asparagine glycans are attached at residues asparagine 192 and asparagine 208. Residue alanine 241 is the site of GPI-anchor amidated alanine attachment. Residues 242 to 264 (SVVLFSSPPVVLLISFLIFLIVG) constitute a propeptide, removed in mature form.

This sequence belongs to the prion family. Monomer and homodimer. Has a tendency to aggregate into amyloid fibrils containing a cross-beta spine, formed by a steric zipper of superposed beta-strands. Soluble oligomers may represent an intermediate stage on the path to fibril formation. Copper binding may promote oligomerization. Interacts with GRB2, APP, ERI3/PRNPIP and SYN1. Mislocalized cytosolically exposed PrP interacts with MGRN1; this interaction alters MGRN1 subcellular location and causes lysosomal enlargement. Interacts with KIAA1191.

It localises to the cell membrane. It is found in the golgi apparatus. In terms of biological role, its primary physiological function is unclear. Has cytoprotective activity against internal or environmental stresses. May play a role in neuronal development and synaptic plasticity. May be required for neuronal myelin sheath maintenance. May play a role in iron uptake and iron homeostasis. Soluble oligomers are toxic to cultured neuroblastoma cells and induce apoptosis (in vitro). Association with GPC1 (via its heparan sulfate chains) targets PRNP to lipid rafts. Also provides Cu(2+) or Zn(2+) for the ascorbate-mediated GPC1 deaminase degradation of its heparan sulfate side chains. The chain is Major prion protein (PRNP) from Boselaphus tragocamelus (Nilgai).